We begin with the raw amino-acid sequence, 490 residues long: Cytochrome P450 2C6 (490 aa).

2 positions are modified to N6-acetyllysine: lysine 249 and lysine 375. Heme is bound at residue cysteine 435.

Belongs to the cytochrome P450 family. The cofactor is heme.

The protein resides in the endoplasmic reticulum membrane. The protein localises to the microsome membrane. The catalysed reaction is an organic molecule + reduced [NADPH--hemoprotein reductase] + O2 = an alcohol + oxidized [NADPH--hemoprotein reductase] + H2O + H(+). Its function is as follows. Cytochromes P450 are a group of heme-thiolate monooxygenases. In liver microsomes, this enzyme is involved in an NADPH-dependent electron transport pathway. It oxidizes a variety of structurally unrelated compounds, including steroids, fatty acids, and xenobiotics. This Rattus norvegicus (Rat) protein is Cytochrome P450 2C6 (Cyp2c6).